Here is a 182-residue protein sequence, read N- to C-terminus: Adenylate kinase (182 aa).

G12–T17 provides a ligand contact to ATP. The segment at S32–V61 is NMP. Residues T33, R38, E59–V61, G85–R88, and Q92 contribute to the AMP site. Residues E126–D132 form an LID region. ATP is bound at residue R127. Residues R129 and R140 each contribute to the AMP site. Residue A168 participates in ATP binding.

This sequence belongs to the adenylate kinase family. Monomer.

The protein localises to the cytoplasm. The enzyme catalyses AMP + ATP = 2 ADP. Its pathway is purine metabolism; AMP biosynthesis via salvage pathway; AMP from ADP: step 1/1. Functionally, catalyzes the reversible transfer of the terminal phosphate group between ATP and AMP. Plays an important role in cellular energy homeostasis and in adenine nucleotide metabolism. This is Adenylate kinase from Prochlorococcus marinus (strain NATL1A).